We begin with the raw amino-acid sequence, 494 residues long: Glutamyl-tRNA(Gln) amidotransferase subunit A (494 aa).

Catalysis depends on charge relay system residues lysine 80 and serine 160. The interval glycine 140–valine 168 is disordered. Residue serine 184 is the Acyl-ester intermediate of the active site.

It belongs to the amidase family. GatA subfamily. In terms of assembly, heterotrimer of A, B and C subunits.

The catalysed reaction is L-glutamyl-tRNA(Gln) + L-glutamine + ATP + H2O = L-glutaminyl-tRNA(Gln) + L-glutamate + ADP + phosphate + H(+). In terms of biological role, allows the formation of correctly charged Gln-tRNA(Gln) through the transamidation of misacylated Glu-tRNA(Gln) in organisms which lack glutaminyl-tRNA synthetase. The reaction takes place in the presence of glutamine and ATP through an activated gamma-phospho-Glu-tRNA(Gln). The protein is Glutamyl-tRNA(Gln) amidotransferase subunit A of Novosphingobium aromaticivorans (strain ATCC 700278 / DSM 12444 / CCUG 56034 / CIP 105152 / NBRC 16084 / F199).